Reading from the N-terminus, the 551-residue chain is Crossover junction endonuclease EME1B (551 aa).

Disordered stretches follow at residues 1 to 55 and 187 to 239; these read MNDH…PIFV and TTLP…RLEK. The span at 37-51 shows a compositional bias: polar residues; sequence SDPTPQKQPPESSFT. Over residues 202 to 239 the composition is skewed to basic and acidic residues; it reads SKEDKTSAMEEKKLRKEQERLEKAASKAEEAERKRLEK. Residues 203 to 253 adopt a coiled-coil conformation; that stretch reads KEDKTSAMEEKKLRKEQERLEKAASKAEEAERKRLEKEKKKWEKGKLALKS. Residues 287-484 enclose the ERCC4 domain; that stretch reads NPIERSIVWT…PSMKSLLKVY (198 aa).

This sequence belongs to the EME1/MMS4 family. In terms of assembly, forms a heterodimer with MUS81. Mg(2+) serves as cofactor. Ca(2+) is required as a cofactor.

The protein localises to the nucleus. Interacts with MUS81 to form a DNA structure-specific endonuclease with substrate preference for branched DNA structures with a 5'-end at the branch nick. Typical substrates include 3'-flap structures, D-loops, replication forks, nicked Holliday junctions and also intact Holliday junctions with a reduced efficiency. May be required in mitosis for the processing of stalled or collapsed replication fork intermediates. Plays a role in DNA repair and in genotoxic stress-induced homologous recombination (HR) in somatic cells. Mediates a subset of meiotic recombination events that are insensitive to crossover interference. The polypeptide is Crossover junction endonuclease EME1B (EME1B) (Arabidopsis thaliana (Mouse-ear cress)).